A 2511-amino-acid chain; its full sequence is Fatty acid synthase (2511 aa).

An N-acetylmethionine modification is found at Met-1. The region spanning 1–406 is the Ketosynthase family 3 (KS3) domain; that stretch reads MEEVVIAGMS…GSNVHIILRP (406 aa). Phosphoserine is present on Ser-63. At Lys-70 the chain carries N6-acetyllysine. Cys-161 acts as the For beta-ketoacyl synthase activity in catalysis. Phosphoserine is present on Ser-207. His-293 (for beta-ketoacyl synthase activity) is an active-site residue. Lys-298 bears the N6-acetyllysine mark. His-331 acts as the For beta-ketoacyl synthase activity in catalysis. The tract at residues 429–817 is acyl and malonyl transferases; it reads RTPEAVQKLL…IDANPNALFP (389 aa). An N6-acetyllysine mark is found at Lys-436 and Lys-528. Ser-581 functions as the For malonyltransferase activity in the catalytic mechanism. An acyl-CoA contacts are provided by residues 647–648 and Phe-671; that span reads DT. Lys-673 is subject to N6-acetyllysine. Ser-725 is subject to Phosphoserine. Arg-773 is a binding site for an acyl-CoA. Residues 838 to 966 are N-terminal hotdog fold; that stretch reads HSLAWDVPAA…KVYQWDDPDP (129 aa). One can recognise a PKS/mFAS DH domain in the interval 838 to 1108; sequence HSLAWDVPAA…TESAPRRQQE (271 aa). His-878 acts as the Proton acceptor; for dehydratase activity in catalysis. Residues 981 to 1108 are C-terminal hotdog fold; it reads EPLFLAQAEV…TESAPRRQQE (128 aa). N6-acetyllysine is present on Lys-992. Asp-1031 serves as the catalytic Proton donor; for dehydratase activity. Residues Ser-1174 and Ser-1411 each carry the phosphoserine modification. An S-nitrosocysteine modification is found at Cys-1471. Phosphoserine is present on residues Ser-1584 and Ser-1594. The segment at 1635–1863 is enoyl reductase; it reads DVPSNWTLEE…VQVLAEEPEA (229 aa). NADP(+) is bound at residue 1671 to 1688; it reads LLIHSGSGGVGQAAIAIA. N6-(pyridoxal phosphate)lysine; alternate is present on Lys-1704. The residue at position 1704 (Lys-1704) is an N6-acetyllysine; alternate. An N6-acetyllysine mark is found at Lys-1771 and Lys-1847. Positions 1864 to 2118 are beta-ketoacyl reductase; the sequence is VLKGAKPKLM…FVLAEKAAAY (255 aa). Position 1886 to 1901 (1886 to 1901) interacts with NADP(+); that stretch reads SYIIAGGLGGFGLELA. Lys-1995 bears the N6-acetyllysine mark. Cys-2091 carries the S-nitrosocysteine modification. Positions 2121–2198 constitute a Carrier domain; it reads RDSQRDLVEA…ELSSKADEAS (78 aa). Ser-2156 is subject to O-(pantetheine 4'-phosphoryl)serine; alternate. A Phosphoserine; alternate modification is found at Ser-2156. A Phosphoserine modification is found at Ser-2198. Phosphothreonine is present on residues Thr-2204 and Thr-2215. A thioesterase region spans residues 2207–2511; that stretch reads EDGLAQQQTQ…AEPRVSVREG (305 aa). At Ser-2236 the chain carries Phosphoserine. Catalysis depends on Ser-2308, which acts as the For thioesterase activity. Lys-2391 carries the post-translational modification N6-acetyllysine. Lys-2449 participates in a covalent cross-link: Glycyl lysine isopeptide (Lys-Gly) (interchain with G-Cter in SUMO2). The active-site For thioesterase activity is His-2481.

Homodimer which is arranged in a head to tail fashion. Interacts with CEACAM1; this interaction is insulin and phosphorylation-dependent; reduces fatty-acid synthase activity. Post-translationally, S-nitrosylation of Fatty acid synthase at cysteine residues Cys-1471 or Cys-2091 is important for the enzyme dimerization. In adipocytes, S-nitrosylation of Fatty acid synthase occurs under physiological conditions and gradually increases during adipogenesis. Ubiquitous. Prominent expression in brain, lung, liver and mammary gland.

The protein resides in the cytoplasm. Its subcellular location is the melanosome. It catalyses the reaction acetyl-CoA + n malonyl-CoA + 2n NADPH + 2n H(+) = a long-chain fatty acid + (n+1) CoA + n CO2 + 2n NADP(+).. The catalysed reaction is holo-[ACP] + acetyl-CoA = acetyl-[ACP] + CoA. The enzyme catalyses holo-[ACP] + malonyl-CoA = malonyl-[ACP] + CoA. It carries out the reaction a fatty acyl-[ACP] + malonyl-[ACP] + H(+) = a 3-oxoacyl-[ACP] + holo-[ACP] + CO2. It catalyses the reaction a (3R)-hydroxyacyl-[ACP] + NADP(+) = a 3-oxoacyl-[ACP] + NADPH + H(+). The catalysed reaction is a (3R)-hydroxyacyl-[ACP] = a (2E)-enoyl-[ACP] + H2O. The enzyme catalyses a 2,3-saturated acyl-[ACP] + NADP(+) = a (2E)-enoyl-[ACP] + NADPH + H(+). It carries out the reaction hexadecanoyl-[ACP] + H2O = hexadecanoate + holo-[ACP] + H(+). It catalyses the reaction acetyl-[ACP] + malonyl-[ACP] + H(+) = 3-oxobutanoyl-[ACP] + holo-[ACP] + CO2. The catalysed reaction is 3-oxobutanoyl-[ACP] + NADPH + H(+) = (3R)-hydroxybutanoyl-[ACP] + NADP(+). The enzyme catalyses (3R)-hydroxybutanoyl-[ACP] = (2E)-butenoyl-[ACP] + H2O. It carries out the reaction (2E)-butenoyl-[ACP] + NADPH + H(+) = butanoyl-[ACP] + NADP(+). It catalyses the reaction butanoyl-[ACP] + malonyl-[ACP] + H(+) = 3-oxohexanoyl-[ACP] + holo-[ACP] + CO2. The catalysed reaction is 3-oxohexanoyl-[ACP] + NADPH + H(+) = (3R)-hydroxyhexanoyl-[ACP] + NADP(+). The enzyme catalyses (3R)-hydroxyhexanoyl-[ACP] = (2E)-hexenoyl-[ACP] + H2O. It carries out the reaction (2E)-hexenoyl-[ACP] + NADPH + H(+) = hexanoyl-[ACP] + NADP(+). It catalyses the reaction hexanoyl-[ACP] + malonyl-[ACP] + H(+) = 3-oxooctanoyl-[ACP] + holo-[ACP] + CO2. The catalysed reaction is 3-oxooctanoyl-[ACP] + NADPH + H(+) = (3R)-hydroxyoctanoyl-[ACP] + NADP(+). The enzyme catalyses (3R)-hydroxyoctanoyl-[ACP] = (2E)-octenoyl-[ACP] + H2O. It carries out the reaction (2E)-octenoyl-[ACP] + NADPH + H(+) = octanoyl-[ACP] + NADP(+). It catalyses the reaction octanoyl-[ACP] + malonyl-[ACP] + H(+) = 3-oxodecanoyl-[ACP] + holo-[ACP] + CO2. The catalysed reaction is 3-oxodecanoyl-[ACP] + NADPH + H(+) = (3R)-hydroxydecanoyl-[ACP] + NADP(+). The enzyme catalyses (3R)-hydroxydecanoyl-[ACP] = (2E)-decenoyl-[ACP] + H2O. It carries out the reaction (2E)-decenoyl-[ACP] + NADPH + H(+) = decanoyl-[ACP] + NADP(+). It catalyses the reaction decanoyl-[ACP] + malonyl-[ACP] + H(+) = 3-oxododecanoyl-[ACP] + holo-[ACP] + CO2. The catalysed reaction is 3-oxododecanoyl-[ACP] + NADPH + H(+) = (3R)-hydroxydodecanoyl-[ACP] + NADP(+). The enzyme catalyses (3R)-hydroxydodecanoyl-[ACP] = (2E)-dodecenoyl-[ACP] + H2O. It carries out the reaction (2E)-dodecenoyl-[ACP] + NADPH + H(+) = dodecanoyl-[ACP] + NADP(+). It catalyses the reaction dodecanoyl-[ACP] + malonyl-[ACP] + H(+) = 3-oxotetradecanoyl-[ACP] + holo-[ACP] + CO2. The catalysed reaction is 3-oxotetradecanoyl-[ACP] + NADPH + H(+) = (3R)-hydroxytetradecanoyl-[ACP] + NADP(+). The enzyme catalyses (3R)-hydroxytetradecanoyl-[ACP] = (2E)-tetradecenoyl-[ACP] + H2O. It carries out the reaction (2E)-tetradecenoyl-[ACP] + NADPH + H(+) = tetradecanoyl-[ACP] + NADP(+). It catalyses the reaction tetradecanoyl-[ACP] + malonyl-[ACP] + H(+) = 3-oxohexadecanoyl-[ACP] + holo-[ACP] + CO2. The catalysed reaction is 3-oxohexadecanoyl-[ACP] + NADPH + H(+) = (3R)-hydroxyhexadecanoyl-[ACP] + NADP(+). The enzyme catalyses (3R)-hydroxyhexadecanoyl-[ACP] = (2E)-hexadecenoyl-[ACP] + H2O. It carries out the reaction (2E)-hexadecenoyl-[ACP] + NADPH + H(+) = hexadecanoyl-[ACP] + NADP(+). It catalyses the reaction hexadecanoyl-[ACP] + malonyl-[ACP] + H(+) = 3-oxooctadecanoyl-[ACP] + holo-[ACP] + CO2. The catalysed reaction is 3-oxooctadecanoyl-[ACP] + NADPH + H(+) = (3R)-hydroxyoctadecanoyl-[ACP] + NADP(+). The enzyme catalyses (3R)-hydroxyoctadecanoyl-[ACP] = (2E)-octadecenoyl-[ACP] + H2O. It carries out the reaction (2E)-octadecenoyl-[ACP] + NADPH + H(+) = octadecanoyl-[ACP] + NADP(+). It catalyses the reaction tetradecanoyl-[ACP] + H2O = tetradecanoate + holo-[ACP] + H(+). The catalysed reaction is octadecanoyl-[ACP] + H2O = octadecanoate + holo-[ACP] + H(+). It functions in the pathway lipid metabolism; fatty acid biosynthesis. Activated by S-nitrosylation which promotes enzyme dimerization. Cerulenin, a potent non-competitive pharmacological inhibitor of FAS, binds covalently to the active site of the condensing enzyme region, inactivating a key enzyme step in fatty acid synthesis. In terms of biological role, fatty acid synthetase is a multifunctional enzyme that catalyzes the de novo biosynthesis of long-chain saturated fatty acids starting from acetyl-CoA and malonyl-CoA in the presence of NADPH. This multifunctional protein contains 7 catalytic activities and a site for the binding of the prosthetic group 4'-phosphopantetheine of the acyl carrier protein ([ACP]) domain. Its function is as follows. (Microbial infection) Fatty acid synthetase activity is required for SARS coronavirus-2/SARS-CoV-2 replication. In Homo sapiens (Human), this protein is Fatty acid synthase (FASN).